The following is an 826-amino-acid chain: Receptor-like protein 18 (826 aa).

The Extracellular segment spans residues 1 to 780; sequence MRCQVWNVIE…EEDEEEVISW (780 aa). LRR repeat units follow at residues 5–31, 32–54, 55–79, 81–103, 104–127, 128–150, and 151–177; these read VWNV…IFSL, QNLR…SLGN, FSSL…LGNL, HLTS…LGNL, SHLT…LGNL, SHLT…SFEN, and LSHL…SFNQ. Asn-12 and Asn-54 each carry an N-linked (GlcNAc...) asparagine glycan. Residues Asn-102, Asn-126, and Asn-150 are each glycosylated (N-linked (GlcNAc...) asparagine). The LRR 8; degenerate repeat unit spans residues 178–198; sequence LVSLAVEENEFTGNFLLILLN. N-linked (GlcNAc...) asparagine glycosylation is found at Asn-198, Asn-201, and Asn-219. 20 LRR repeats span residues 199-223, 225-247, 248-271, 273-294, 296-318, 319-343, 345-368, 382-405, 406-429, 430-452, 455-478, 479-500, 501-524, 525-550, 552-570, 571-594, 637-661, 662-685, 686-709, and 711-734; these read LTNL…MSSL, NLVL…LLNI, PSLS…NISS, LSDL…ISKL, NLYT…IFSD, LKLL…TFLS, FKSL…SVSN, PLLL…LRTQ, QTME…LWTL, PTLD…MVPS, QPSM…FICA, FTLQ…ENIS, ESLK…LVRI, SSLE…SLEE, QVLV…QTRF, PNLR…FFVN, LKIF…IGLL, KELH…MGKL, RELE…LGDL, and YLAY…QFLT. Asn-268 carries N-linked (GlcNAc...) asparagine glycosylation. N-linked (GlcNAc...) asparagine glycans are attached at residues Asn-312, Asn-331, Asn-362, and Asn-389. 4 N-linked (GlcNAc...) asparagine glycosylation sites follow: Asn-436, Asn-439, Asn-467, and Asn-498. A glycan (N-linked (GlcNAc...) asparagine) is linked at Asn-538. N-linked (GlcNAc...) asparagine glycosylation is found at Asn-584 and Asn-594. Asn-668 carries an N-linked (GlcNAc...) asparagine glycan. Residues Asn-716 and Asn-736 are each glycosylated (N-linked (GlcNAc...) asparagine). The helical transmembrane segment at 781–801 threads the bilayer; that stretch reads IAATIGFIPGIAFGLMMGYIL. At 802–826 the chain is on the cytoplasmic side; that stretch reads VCYKPEWFMNVFGKNKSRSTSSTTR.

The protein belongs to the RLP family.

The protein localises to the cell membrane. The protein is Receptor-like protein 18 of Arabidopsis thaliana (Mouse-ear cress).